The following is a 289-amino-acid chain: Mas-related G-protein coupled receptor member G (289 aa).

The Extracellular segment spans residues M1–S13. Residues V14–L34 traverse the membrane as a helical segment. Topologically, residues W35 to K42 are cytoplasmic. Residues K43–C63 traverse the membrane as a helical segment. The Extracellular portion of the chain corresponds to R64–D78. Residues T79–F99 form a helical membrane-spanning segment. At S100 to H120 the chain is on the cytoplasmic side. A helical membrane pass occupies residues A121–A141. The Extracellular segment spans residues N142–S163. A helical membrane pass occupies residues V164–W184. The Cytoplasmic segment spans residues V185 to R195. The helical transmembrane segment at L196–F216 threads the bilayer. Residues Y217 to Q221 are Extracellular-facing. A helical transmembrane segment spans residues P222–N242. Residues S243–L289 are Cytoplasmic-facing.

This sequence belongs to the G-protein coupled receptor 1 family. Mas subfamily.

The protein resides in the cell membrane. Functionally, orphan receptor. May regulate nociceptor function and/or development, including the sensation or modulation of pain. The sequence is that of Mas-related G-protein coupled receptor member G (MRGPRG) from Homo sapiens (Human).